A 317-amino-acid chain; its full sequence is Glycerol-3-phosphate dehydrogenase [NAD(P)+] (317 aa).

NADPH contacts are provided by S14, F15, R35, and K109. Residues K109 and G137 each contribute to the sn-glycerol 3-phosphate site. A141 provides a ligand contact to NADPH. Residues K192, D248, S258, R259, and N260 each coordinate sn-glycerol 3-phosphate. Catalysis depends on K192, which acts as the Proton acceptor. R259 contacts NADPH. Residues L283 and E285 each coordinate NADPH.

This sequence belongs to the NAD-dependent glycerol-3-phosphate dehydrogenase family.

It localises to the cytoplasm. The catalysed reaction is sn-glycerol 3-phosphate + NAD(+) = dihydroxyacetone phosphate + NADH + H(+). It catalyses the reaction sn-glycerol 3-phosphate + NADP(+) = dihydroxyacetone phosphate + NADPH + H(+). It functions in the pathway membrane lipid metabolism; glycerophospholipid metabolism. In terms of biological role, catalyzes the reduction of the glycolytic intermediate dihydroxyacetone phosphate (DHAP) to sn-glycerol 3-phosphate (G3P), the key precursor for phospholipid synthesis. This is Glycerol-3-phosphate dehydrogenase [NAD(P)+] from Rickettsia akari (strain Hartford).